We begin with the raw amino-acid sequence, 110 residues long: Thioredoxin (110 aa).

Residues 3 to 108 (KPIEVHDSDF…YREIFDKVLA (106 aa)) form the Thioredoxin domain. A disulfide bridge links Cys-32 with Cys-35. The residue at position 105 (Lys-105) is an N6,N6-dimethyllysine; alternate. Lys-105 carries the N6-methyllysine; alternate modification.

Participates in various redox reactions through the reversible oxidation of its active center dithiol to a disulfide and catalyzes dithiol-disulfide exchange reactions. This Chloroflexus aurantiacus (strain ATCC 29366 / DSM 635 / J-10-fl) protein is Thioredoxin (trxA).